The primary structure comprises 301 residues: MIYLHAIDPIAFSLGPVKVHWYGLMYLAGFGAAWCLGRQRIQAGRLLGVNIDGFSDLLFYAMMGVVLGGRVGYMLFYAFHDFLQEPLLLFRVWEGGMSFHGGLIGVLLAVAWWSRRQRMHMFDVVDFCAPLVPVGLGFGRLGNFIGGELWGKLTHNGWGVIFPRAPLSDVPAGQLAMQDVMNFVQIQEHYAAGLLGHYARHPSQLYEAFLEGLVMFIVLWLFSRKLRPRYAVSGLFALLYGVFRFLVEFVRMPDNGVYVAFGWLTRGQILSLPLIVIGLFLFWLSCRSPVLQPVPAPEVAK.

Transmembrane regions (helical) follow at residues 10 to 30, 57 to 77, 92 to 112, and 119 to 139; these read IAFS…LAGF, LLFY…MLFY, VWEG…AVAW, and MHMF…LGFG. Arginine 140 contributes to the a 1,2-diacyl-sn-glycero-3-phospho-(1'-sn-glycerol) binding site. The next 3 helical transmembrane spans lie at 202–222, 230–250, and 264–284; these read PSQL…LWLF, YAVS…VEFV, and LTRG…LFWL.

Belongs to the Lgt family.

It is found in the cell inner membrane. The enzyme catalyses L-cysteinyl-[prolipoprotein] + a 1,2-diacyl-sn-glycero-3-phospho-(1'-sn-glycerol) = an S-1,2-diacyl-sn-glyceryl-L-cysteinyl-[prolipoprotein] + sn-glycerol 1-phosphate + H(+). It participates in protein modification; lipoprotein biosynthesis (diacylglyceryl transfer). Functionally, catalyzes the transfer of the diacylglyceryl group from phosphatidylglycerol to the sulfhydryl group of the N-terminal cysteine of a prolipoprotein, the first step in the formation of mature lipoproteins. The protein is Phosphatidylglycerol--prolipoprotein diacylglyceryl transferase of Xylella fastidiosa (strain M12).